A 276-amino-acid chain; its full sequence is Octanoyltransferase LipM (276 aa).

Positions 32-247 (GEVAPTLRFY…GFEDALQLTF (216 aa)) constitute a BPL/LPL catalytic domain. Cysteine 149 (acyl-thioester intermediate) is an active-site residue.

It belongs to the octanoyltransferase LipM family. As to quaternary structure, monomer.

The catalysed reaction is octanoyl-[ACP] + L-lysyl-[protein] = N(6)-octanoyl-L-lysyl-[protein] + holo-[ACP] + H(+). It participates in protein modification; protein lipoylation via endogenous pathway; protein N(6)-(lipoyl)lysine from octanoyl-[acyl-carrier-protein]. Functionally, catalyzes the transfer of endogenously produced octanoic acid from octanoyl-acyl-carrier-protein onto the lipoyl domain of GcvH, an intermediate carrier during protein lipoylation. This chain is Octanoyltransferase LipM, found in Exiguobacterium sibiricum (strain DSM 17290 / CCUG 55495 / CIP 109462 / JCM 13490 / 255-15).